The chain runs to 617 residues: MQNKYPLLSQINSPEDLRLLAKEQLQSVADELRAYLLESVSQTSGHLASGLGVVELTVALHYVYQTPFDQLIWDVGHQAYPHKILTGRRDQMHTIRQKNGIHPFPWREESLYDVLSVGHSSTSISAGVGIAVAAEKENAGRKTVCVIGDGAITAGMAFEAMNHAGALHTDMLVILNDNEMSISENVGALNNHLARIFSGSIYTTVRDGSKKVLDKVPTIKNFMKKSEEHMKGVISPESTLFEELGFNYIGPIDGHNIDELVKTLSNMRELKGPQFLHIRTKKGKGYEPAENDPIGYHGVPKFDPTCGQLPKSKTIPTYSDIFGNWLCEMAEQDSKLIGITPAMREGSGMVEFSKRFPEQYFDVAIAEQHAVTFGAGLAIAGYKPVVAIYSSFLQRAYDQLIHDVAIQNLPVIFAIDRAGIVGADGQTHQGAFDVSFMRCIPNMTIMCPSDENEMRQMLYTAYRMNTPTAVRYPRGNAQGVALAPMQALEVGKGKLIQQGQKVAILNFGPLLNEARIVAEKHNYTLADMRFVKPLDEQLVAELADSHELLVTLEENAIQGGAGSAVNEYLQKIGKIRPLVMLGIPDFFVPQATQAESYADLGLDAAGIEQRIQAVVNQ.

Thiamine diphosphate is bound by residues H77 and 118–120 (GHS). Position 149 (D149) interacts with Mg(2+). Thiamine diphosphate-binding positions include 150 to 151 (GA), N178, Y286, and E367. N178 is a binding site for Mg(2+).

This sequence belongs to the transketolase family. DXPS subfamily. In terms of assembly, homodimer. Mg(2+) serves as cofactor. Thiamine diphosphate is required as a cofactor.

The catalysed reaction is D-glyceraldehyde 3-phosphate + pyruvate + H(+) = 1-deoxy-D-xylulose 5-phosphate + CO2. Its pathway is metabolic intermediate biosynthesis; 1-deoxy-D-xylulose 5-phosphate biosynthesis; 1-deoxy-D-xylulose 5-phosphate from D-glyceraldehyde 3-phosphate and pyruvate: step 1/1. Catalyzes the acyloin condensation reaction between C atoms 2 and 3 of pyruvate and glyceraldehyde 3-phosphate to yield 1-deoxy-D-xylulose-5-phosphate (DXP). In Actinobacillus pleuropneumoniae serotype 5b (strain L20), this protein is 1-deoxy-D-xylulose-5-phosphate synthase.